Consider the following 541-residue polypeptide: Light-independent protochlorophyllide reductase subunit B (541 aa).

Aspartate 36 is a binding site for [4Fe-4S] cluster. Aspartate 287 serves as the catalytic Proton donor. 422–423 contributes to the substrate binding site; that stretch reads GL.

Belongs to the ChlB/BchB/BchZ family. In terms of assembly, protochlorophyllide reductase is composed of three subunits; BchL, BchN and BchB. Forms a heterotetramer of two BchB and two BchN subunits. Requires [4Fe-4S] cluster as cofactor.

The enzyme catalyses chlorophyllide a + oxidized 2[4Fe-4S]-[ferredoxin] + 2 ADP + 2 phosphate = protochlorophyllide a + reduced 2[4Fe-4S]-[ferredoxin] + 2 ATP + 2 H2O. It functions in the pathway porphyrin-containing compound metabolism; bacteriochlorophyll biosynthesis (light-independent). Functionally, component of the dark-operative protochlorophyllide reductase (DPOR) that uses Mg-ATP and reduced ferredoxin to reduce ring D of protochlorophyllide (Pchlide) to form chlorophyllide a (Chlide). This reaction is light-independent. The NB-protein (BchN-BchB) is the catalytic component of the complex. The polypeptide is Light-independent protochlorophyllide reductase subunit B (Rhodopseudomonas palustris (strain HaA2)).